Consider the following 1275-residue polypeptide: Membrane-associated guanylate kinase, WW and PDZ domain-containing protein 2 (1275 aa).

In terms of domain architecture, PDZ 1 spans 17 to 101 (ESVIGRNPEG…PLRLKCVKQG (85 aa)). The 175-residue stretch at 109–283 (RHYLNLRFQK…PVYSQPEELK (175 aa)) folds into the Guanylate kinase-like domain. The segment at 203 to 305 (LPGATPSAEG…ENEDSDPLPD (103 aa)) is disordered. Over residues 280–295 (EELKDQMDDTKPTKPE) the composition is skewed to basic and acidic residues. WW domains are found at residues 301–334 (DPLPDNWEMAYTEKGEVYFIDHNTKTTSWLDPRL) and 347–380 (NELPYGWEKIDDPIYGTYYVDHINRRTQFENPVL). Residues 301–380 (DPLPDNWEMA…RRTQFENPVL (80 aa)) are interaction with DDN. Position 361 is a phosphotyrosine (Tyr361). 2 consecutive PDZ domains span residues 425 to 509 (STTL…CRGY) and 604 to 682 (TLTI…HRGG). Position 685 is a phosphoserine (Ser685). Residues 698 to 740 (ENQGSPQTSLSAPAVPQNLPFPPALHRSSFPDSTEAFDPRKPD) form a disordered region. The span at 699 to 708 (NQGSPQTSLS) shows a compositional bias: polar residues. A PDZ 4 domain is found at 777-859 (DVHLRRMESG…NGQVNLTVRR (83 aa)). The residue at position 826 (Tyr826) is a Phosphotyrosine. Residues 868-912 (CPENGRSPGSVSTHHSSPRSDYATYSNSNHAAPSSNASPPEGFAS) form a disordered region. A phosphoserine mark is found at Ser883 and Ser884. The span at 893-907 (SNSNHAAPSSNASPP) shows a compositional bias: low complexity. Residues 919-1009 (DVVIHRKENE…SVTLRIIPQE (91 aa)) enclose the PDZ 5 domain. The segment covering 1010–1040 (ELNSPTSAPSSEKQSPMAQQHSPLAQQSPLA) has biased composition (polar residues). Residues 1010–1128 (ELNSPTSAPS…PDTRQYPLSD (119 aa)) form a disordered region. Residue Ser1013 is modified to Phosphoserine. Positions 1067–1083 (NSYRSEVKARQDVKPDI) are enriched in basic and acidic residues. The 83-residue stretch at 1139–1221 (TVDMEKGAKG…RVRLLLKRGT (83 aa)) folds into the PDZ 6 domain.

This sequence belongs to the MAGUK family. As to quaternary structure, interacts (via its WW domains) with DRPLA. Interacts (via its second PDZ domain) with PTEN (via unphosphorylated C-terminus); this interaction diminishes the degradation rate of PTEN. Interacts (via guanylate kinase domain) with DLGAP1. Interacts (via the PDZ domains) with GRIN2A, GRID2 and NLGN1. Interacts with CTNND2, CTNNB1 and MAGUIN-1. Interacts with ACVR2A, SMAD2 and SMAD3. Part of a complex consisting of MAGI2/ARIP1, ACVR2A, ACVR1B and SMAD3. May interact with HTR2A. Interacts with RAPGEF2. Identified in a complex with ACTN4, CASK, IQGAP1, NPHS1, SPTAN1 and SPTBN1. Interacts with DDN. Found in a complex, at least composed of KIDINS220, MAGI2, NTRK1 and RAPGEF2; the complex is mainly formed at late endosomes in a NGF-dependent manner. Interacts with RAPGEF2; the interaction occurs before or after nerve growth factor (NGF) stimulation. Interacts (via PDZ domain) with KIDINS220 (via C-terminal domain). Interacts with IGSF9 and HTR4. Interacts with DLL1. Found in a complex with IGSF9B and NLGN2; the interaction with IGSF9B is mediated via the PDZ 5 and PDZ 6 domains, while the interaction with NLGN2 is mediated via the WW1, WW2 and PDZ2 domains. Interacts (via PDZ 6 domain) with USH1G (via SAM domain); the interaction is triggered by phosphorylation of USH1G by CK2 and negatively regulates MAGI2-mediated endocytosis. In terms of tissue distribution, expressed throughout the retina except in the nuclear layers and the photoreceptor outer segments (at protein level). Highest retinal expression is observed in the outer plexiform layer, the outer limiting membrane and the inner segment of photoreceptor cells (at protein level). Expressed in brain.

Its subcellular location is the cytoplasm. The protein resides in the late endosome. The protein localises to the synapse. It is found in the synaptosome. It localises to the cell membrane. Its subcellular location is the cytoskeleton. The protein resides in the microtubule organizing center. The protein localises to the centrosome. It is found in the cell projection. It localises to the cilium. Its subcellular location is the centriole. The protein resides in the photoreceptor inner segment. The protein localises to the photoreceptor outer segment. Functionally, seems to act as a scaffold molecule at synaptic junctions by assembling neurotransmitter receptors and cell adhesion proteins. Plays a role in nerve growth factor (NGF)-induced recruitment of RAPGEF2 to late endosomes and neurite outgrowth. May play a role in regulating activin-mediated signaling in neuronal cells. Enhances the ability of PTEN to suppress AKT1 activation. Plays a role in receptor-mediated clathrin-dependent endocytosis which is required for ciliogenesis. The sequence is that of Membrane-associated guanylate kinase, WW and PDZ domain-containing protein 2 (Magi2) from Mus musculus (Mouse).